Reading from the N-terminus, the 49-residue chain is Large ribosomal subunit protein bL33A (49 aa).

This sequence belongs to the bacterial ribosomal protein bL33 family.

In Leuconostoc mesenteroides subsp. mesenteroides (strain ATCC 8293 / DSM 20343 / BCRC 11652 / CCM 1803 / JCM 6124 / NCDO 523 / NBRC 100496 / NCIMB 8023 / NCTC 12954 / NRRL B-1118 / 37Y), this protein is Large ribosomal subunit protein bL33A.